The following is a 184-amino-acid chain: ATP synthase subunit b, chloroplastic (184 aa).

The helical transmembrane segment at isoleucine 29–leucine 49 threads the bilayer.

The protein belongs to the ATPase B chain family. F-type ATPases have 2 components, F(1) - the catalytic core - and F(0) - the membrane proton channel. F(1) has five subunits: alpha(3), beta(3), gamma(1), delta(1), epsilon(1). F(0) has four main subunits: a(1), b(1), b'(1) and c(10-14). The alpha and beta chains form an alternating ring which encloses part of the gamma chain. F(1) is attached to F(0) by a central stalk formed by the gamma and epsilon chains, while a peripheral stalk is formed by the delta, b and b' chains.

It is found in the plastid. The protein localises to the chloroplast thylakoid membrane. Functionally, f(1)F(0) ATP synthase produces ATP from ADP in the presence of a proton or sodium gradient. F-type ATPases consist of two structural domains, F(1) containing the extramembraneous catalytic core and F(0) containing the membrane proton channel, linked together by a central stalk and a peripheral stalk. During catalysis, ATP synthesis in the catalytic domain of F(1) is coupled via a rotary mechanism of the central stalk subunits to proton translocation. Its function is as follows. Component of the F(0) channel, it forms part of the peripheral stalk, linking F(1) to F(0). This chain is ATP synthase subunit b, chloroplastic, found in Adiantum capillus-veneris (Maidenhair fern).